Reading from the N-terminus, the 102-residue chain is Small ribosomal subunit protein uS10 (102 aa).

Belongs to the universal ribosomal protein uS10 family. As to quaternary structure, part of the 30S ribosomal subunit.

Its function is as follows. Involved in the binding of tRNA to the ribosomes. This Heliobacterium modesticaldum (strain ATCC 51547 / Ice1) protein is Small ribosomal subunit protein uS10.